The sequence spans 175 residues: Large ribosomal subunit protein mL67 (175 aa).

The protein belongs to the mitochondrion-specific ribosomal protein mL67 family. In terms of assembly, component of the mitochondrial large ribosomal subunit (mt-LSU). Mature yeast 74S mitochondrial ribosomes consist of a small (37S) and a large (54S) subunit. The 37S small subunit contains a 15S ribosomal RNA (15S mt-rRNA) and at least 32 different proteins. The 54S large subunit contains a 21S rRNA (21S mt-rRNA) and at least 45 different proteins.

It localises to the mitochondrion. Its function is as follows. Component of the mitochondrial ribosome (mitoribosome), a dedicated translation machinery responsible for the synthesis of mitochondrial genome-encoded proteins, including at least some of the essential transmembrane subunits of the mitochondrial respiratory chain. The mitoribosomes are attached to the mitochondrial inner membrane and translation products are cotranslationally integrated into the membrane. mL67/mhr1 also has extraribosomal functions, being involved in regulation of mitochondrial DNA recombination, maintenance and repair, and generation of homoplasmic cells. mL67/mhr1 also acts as transcription factor involved in regulation of RNA polymerase II-dependent transcription. The polypeptide is Large ribosomal subunit protein mL67 (mhr1) (Schizosaccharomyces pombe (strain 972 / ATCC 24843) (Fission yeast)).